The primary structure comprises 141 residues: Hemoglobin subunit zeta (141 aa).

Position 1 is an N-acetylserine (serine 1). Residues 1 to 141 (SLTKAERTII…VSGVLTEKYR (141 aa)) form the Globin domain. Threonine 28 is subject to Phosphothreonine. Serine 52 bears the Phosphoserine mark. Histidine 58 provides a ligand contact to heme b. Residue serine 72 is modified to Phosphoserine. Histidine 87 lines the heme b pocket.

The protein belongs to the globin family. Heterotetramer of two zeta chains and two epsilon chains.

Functionally, the zeta chain is an alpha-type chain of mammalian embryonic hemoglobin. In Sus scrofa (Pig), this protein is Hemoglobin subunit zeta.